The chain runs to 643 residues: 1-deoxy-D-xylulose-5-phosphate synthase (643 aa).

Thiamine diphosphate is bound by residues H79 and 120–122 (AHA). D151 is a Mg(2+) binding site. Thiamine diphosphate-binding positions include 152 to 153 (GS), N180, Y287, and E369. N180 contacts Mg(2+).

The protein belongs to the transketolase family. DXPS subfamily. In terms of assembly, homodimer. Mg(2+) serves as cofactor. Thiamine diphosphate is required as a cofactor.

The catalysed reaction is D-glyceraldehyde 3-phosphate + pyruvate + H(+) = 1-deoxy-D-xylulose 5-phosphate + CO2. The protein operates within metabolic intermediate biosynthesis; 1-deoxy-D-xylulose 5-phosphate biosynthesis; 1-deoxy-D-xylulose 5-phosphate from D-glyceraldehyde 3-phosphate and pyruvate: step 1/1. Catalyzes the acyloin condensation reaction between C atoms 2 and 3 of pyruvate and glyceraldehyde 3-phosphate to yield 1-deoxy-D-xylulose-5-phosphate (DXP). In Maricaulis maris (strain MCS10) (Caulobacter maris), this protein is 1-deoxy-D-xylulose-5-phosphate synthase.